The following is a 532-amino-acid chain: Probable rhamnogalacturonase B (532 aa).

The first 21 residues, 1-21, serve as a signal peptide directing secretion; the sequence is MRINTLSLFSLVSLVPTLALA. C42 and C68 are joined by a disulfide. The active-site Proton donor is D219. C221 and C238 are joined by a disulfide. Residue N239 is glycosylated (N-linked (GlcNAc...) asparagine). H294 is a catalytic residue. The N-linked (GlcNAc...) asparagine glycan is linked to N321. Intrachain disulfides connect C344/C350 and C374/C383. Composition is skewed to low complexity over residues 466-475 and 490-499; these read TVAAATSTPA and QPSQQSPGQS. Positions 466 to 532 are disordered; that stretch reads TVAAATSTPA…HRHHQRHGHH (67 aa). Residues 521–532 show a composition bias toward basic residues; it reads AGHRHHQRHGHH.

It belongs to the glycosyl hydrolase 28 family.

It is found in the secreted. The enzyme catalyses Endohydrolysis of alpha-D-GalA-(1-&gt;2)-alpha-L-Rha glycosidic bond in the rhamnogalacturonan I backbone with initial inversion of anomeric configuration releasing oligosaccharides with beta-D-GalA at the reducing end.. Pectinolytic enzymes consist of four classes of enzymes: pectine lyase, polygalacturonase, pectin methylesterase and rhamnogalacturonase. Hydrolyzes alpha-D-galacturonopyranosyl-(1,2)-alpha-L-rhamnopyranosyl linkages in the backbone of the hairy regions of pectins. This chain is Probable rhamnogalacturonase B (rhgB), found in Aspergillus oryzae (strain ATCC 42149 / RIB 40) (Yellow koji mold).